A 642-amino-acid polypeptide reads, in one-letter code: MPCGEDWLSHPLGIVQGFFAQNGVNPDWEKKVIEYFKEKLKENNAPKWVPSLNEVPLHYLKPNSFVKFRCMIQDMFDPEFYMGIYETVNQNTKARVLHFGKYRDVAECGPQQELDLSSPRSTTSERQTFYCVPVPGESSWVKEAYVNANQARVSPSTSYTPSRHKRSYEDDEDMDLQPSKQKEQHPGSRQAGGLGGLHWCGEPKRLETEASSGQQLNTLNLSSPFDLNFPLPGEKGPACLVKVYEDWDCFKVNDVLELYGVLSVDPVLSVLNSEERDASALLDPMECTDMAEEQRVHSPPASLVPRIHVILAQKLQHINPLLPTCLNKEESRSCQFVSNFMSELSPVRAELLGFLTHALLGDSLAAEYLILHLISTVYTRRDVLPLGKFTVNLSGCPQNSTFTEHLYRIIQHLVPASFRLQMTIENMNQLKLIPHKDYTANRLVSGLLQLPNNTSLVIDETLLEQGQLDTPGVHNVTALSNLITWQKVDYDFSYHQMEFPCNINVLITSEGRSLLPADCQIHLQPQLIPPNMEEYMNGLLSAVLPSVLNKFRIYLTLLRFLDYNLSDDITKAVEDDFVEMRKDDPQSITADDLHQLLVVARFLSLSVGQTTLSRERWLRAKQLELSRKARLQQQKSVNGNEL.

A compositionally biased stretch (polar residues) spans 151-161 (ARVSPSTSYTP). Positions 151-196 (ARVSPSTSYTPSRHKRSYEDDEDMDLQPSKQKEQHPGSRQAGGLGG) are disordered. The residue at position 154 (S154) is a Phosphoserine. T160 bears the Phosphothreonine mark. S167 and S298 each carry phosphoserine.

The protein belongs to the MCMBP family. Interacts with the MCM complex: associates with the MCM3-7 complex which lacks MCM2, while it does not interact with the MCM complex when MCM2 is present (MCM2-7 complex). Interacts with the RPA complex, when composed of all RPA1, RPA2 and RPA3 components, but not with RPA1 or RPA2 alone.

It localises to the nucleus. Associated component of the MCM complex that acts as a regulator of DNA replication. Binds to the MCM complex during late S phase and promotes the disassembly of the MCM complex from chromatin, thereby acting as a key regulator of pre-replication complex (pre-RC) unloading from replicated DNA. Can dissociate the MCM complex without addition of ATP; probably acts by destabilizing interactions of each individual subunits of the MCM complex. Required for sister chromatid cohesion. This is Mini-chromosome maintenance complex-binding protein (Mcmbp) from Mus musculus (Mouse).